Here is a 238-residue protein sequence, read N- to C-terminus: Probable xyloglucan-specific endo-beta-1,4-glucanase A (238 aa).

Residues 1-18 form the signal peptide; that stretch reads MKLSLSVALSLAASTAQA. 2 N-linked (GlcNAc...) asparagine glycosylation sites follow: Asn106 and Asn171.

Belongs to the glycosyl hydrolase 12 (cellulase H) family.

The protein resides in the secreted. It catalyses the reaction xyloglucan + H2O = xyloglucan oligosaccharides.. In terms of biological role, catalyzes endohydrolysis of 1,4-beta-D-glucosidic linkages in xyloglucan with retention of the beta-configuration of the glycosyl residues. Specific for xyloglucan and does not hydrolyze other cell wall components. The chain is Probable xyloglucan-specific endo-beta-1,4-glucanase A (xgeA) from Aspergillus fumigatus (strain ATCC MYA-4609 / CBS 101355 / FGSC A1100 / Af293) (Neosartorya fumigata).